A 570-amino-acid chain; its full sequence is Peptidyl-prolyl cis-trans isomerase FKBP9 (570 aa).

A signal peptide spans 1 to 24; that stretch reads MALGARGWRRRSLLLLLLWVTGQA. 4 consecutive PPIase FKBP-type domains span residues 54–142, 166–254, 278–365, and 389–477; these read GDFV…VDIW, SDFV…LDLH, GDFL…IDFH, and GDYL…LELV. N-linked (GlcNAc...) asparagine glycans are attached at residues asparagine 174, asparagine 286, asparagine 302, and asparagine 397. 2 EF-hand domains span residues 488–523 and 533–568; these read WNGEVSPNLFEEIDRDGNGEVLLEEFSEYIHAQVAT and NAEMIVKNMFTNQDRNGDGKVTAEEFKLKDQEAKHD. Aspartate 501, aspartate 503, asparagine 505, glutamate 507, glutamate 512, aspartate 546, asparagine 548, aspartate 550, lysine 552, and glutamate 557 together coordinate Ca(2+). The Prevents secretion from ER signature appears at 567–570; that stretch reads HDEL.

Post-translationally, phosphorylated. As to expression, predominantly expressed in heart, skeletal muscle, lung, liver and kidney. Lower levels found in brain, spleen and testis.

The protein localises to the endoplasmic reticulum lumen. It catalyses the reaction [protein]-peptidylproline (omega=180) = [protein]-peptidylproline (omega=0). Its activity is regulated as follows. Inhibited by FK506. Functionally, PPIases accelerate the folding of proteins during protein synthesis. This is Peptidyl-prolyl cis-trans isomerase FKBP9 (Fkbp9) from Mus musculus (Mouse).